We begin with the raw amino-acid sequence, 455 residues long: MFDIEKFWQHFNDEMRARFNEVAYNAWFKNTKPIFYNKNTHELKILVQNPVAKGYWEKNLSSQLIQSAYGYAGIEILPVFQINENNDSPERIVTPEPRYAIQLQQEKRAHKQFTKNLKLNEKYTFDNFVQGEGNKLAAGAALAVADSPGSFYNPLFIFGGVGLGKTHLMQAIGHQMLAERPNAKVVYIQSETFVNDFINSIKNKTQDQFREKYRTCDLLLVDDIQFFAKKEGIQEEFFHTFETLYNDQKQIVMTSDRLPTEIPDLSERLVSRFTWGLQVEITPPDLETRIAILRRKAEAEGLVIDDNTLDYIASQVDTNIRELEGALVKVQAYATIERADINVNLAREALVDLKLVQKNRGLQISKIQEVVANYFQTSTAELKGKKRVRQIVVPRQIAMYLSRELTDASLPKIGQEFGGKDHTTVMHAYDKIDKQIKTDTEIKSAVFDLKQMIEH.

Residues 1-74 (MFDIEKFWQH…IQSAYGYAGI (74 aa)) form a domain I, interacts with DnaA modulators region. The tract at residues 74–117 (IEILPVFQINENNDSPERIVTPEPRYAIQLQQEKRAHKQFTKNL) is domain II. The interval 118 to 334 (KLNEKYTFDN…GALVKVQAYA (217 aa)) is domain III, AAA+ region. ATP-binding residues include Gly-162, Gly-164, Lys-165, and Thr-166. Residues 335–455 (TIERADINVN…VFDLKQMIEH (121 aa)) are domain IV, binds dsDNA.

This sequence belongs to the DnaA family. As to quaternary structure, oligomerizes as a right-handed, spiral filament on DNA at oriC.

The protein localises to the cytoplasm. Plays an essential role in the initiation and regulation of chromosomal replication. ATP-DnaA binds to the origin of replication (oriC) to initiate formation of the DNA replication initiation complex once per cell cycle. Binds the DnaA box (a 9 base pair repeat at the origin) and separates the double-stranded (ds)DNA. Forms a right-handed helical filament on oriC DNA; dsDNA binds to the exterior of the filament while single-stranded (ss)DNA is stabiized in the filament's interior. The ATP-DnaA-oriC complex binds and stabilizes one strand of the AT-rich DNA unwinding element (DUE), permitting loading of DNA polymerase. After initiation quickly degrades to an ADP-DnaA complex that is not apt for DNA replication. Binds acidic phospholipids. The sequence is that of Chromosomal replication initiator protein DnaA from Lactobacillus helveticus (strain DPC 4571).